Consider the following 677-residue polypeptide: WD repeat-containing protein 48 (677 aa).

Tyr28 bears the Phosphotyrosine mark. 8 WD repeats span residues 28 to 67 (YNRNGVNALQLDPALNRLFTAGRDSIIRIWSVNQHKQDPY), 73 to 112 (HHTDWVNDIVLCCNGKTLISASSDTTVKVWNAHKGFCMST), 115 to 154 (THKDYVKALAYAKDKELVASAGLDRQIFLWDVNTLTALTA), 166 to 205 (GNKDSIYSLAMNQLGTIIVSGSTEKVLRVWDPRTCAKLMK), 208 to 247 (GHTDNVKALLLNRDGTQCLSGSSDGTIRLWSLGQQRCIAT), 250 to 289 (VHDEGVWALQVNDAFTHVYSGGRDRKIYCTDLRNPDIRVL), 292 to 334 (EEKA…NFRA), and 358 to 397 (KGGASIIQCHILNDKRHILTKDTNNNVAYWDVLKACKVED). The residue at position 214 (Lys214) is an N6-acetyllysine. Lys578 bears the N6-acetyllysine mark. The interval 607 to 628 (LDNESQTTSSSNNEKPGEQEKE) is disordered. A compositionally biased stretch (low complexity) spans 609–620 (NESQTTSSSNNE). A Phosphothreonine modification is found at Thr613.

It belongs to the WD repeat WDR48 family. As to quaternary structure, interacts with USP46. Interacts with USP1. Interacts with USP12. Component of the USP12-WDR20-WDR48 deubiquitinating complex. Component of the USP12-DMWD-WDR48 deubiquitinating complex. Interacts with PHLPP1. Interacts with RAD51AP1; the interaction is direct and promotes formation of a trimeric complex with RAD51 via RAD51AP1. Interacts with ATAD5; the interaction regulates USP1-mediated PCNA deubiquitination. Interacts with RAD51; the interaction is enhanced under replication stress. Interacts with ITCH; the interaction is more efficient when both USP12 and WDR48/UAF1 are involved and may facilitate recruitment of the USP12 deubiquitinating complex to Notch. In terms of assembly, (Microbial infection) Interacts with papillomavirus HPV11 E1 protein. (Microbial infection) Interacts with Saimiriine herpesvirus TIP protein. As to quaternary structure, (Microbial infection) Interacts with human cytomegalovirus protein UL138. In terms of assembly, (Microbial infection) Interacts with Epstein-Barr virus protein EBNA3. Ubiquitous.

The protein resides in the nucleus. It is found in the cytoplasm. Its subcellular location is the lysosome. The protein localises to the late endosome. Regulator of deubiquitinating complexes, which acts as a strong activator of USP1, USP12 and USP46. Enhances the USP1-mediated deubiquitination of FANCD2; USP1 being almost inactive by itself. Activates deubiquitination by increasing the catalytic turnover without increasing the affinity of deubiquitinating enzymes for the substrate. Also activates deubiquitinating activity of complexes containing USP12. In complex with USP12, acts as a potential tumor suppressor by positively regulating PHLPP1 stability. Docks at the distal end of the USP12 fingers domain and induces a cascade of structural changes leading to the activation of the enzyme. Together with RAD51AP1, promotes DNA repair by stimulating RAD51-mediated homologous recombination. Binds single-stranded DNA (ssDNA) and double-stranded DNA (dsDNA). DNA-binding is required both for USP1-mediated deubiquitination of FANCD2 and stimulation of RAD51-mediated homologous recombination: both WDR48/UAF1 and RAD51AP1 have coordinated role in DNA-binding during these processes. Together with ATAD5 and by regulating USP1 activity, has a role in PCNA-mediated translesion synthesis (TLS) by deubiquitinating monoubiquitinated PCNA. Together with ATAD5, has a role in recruiting RAD51 to stalled forks during replication stress. Functionally, (Microbial infection) In case of infection by Herpesvirus saimiri, may play a role in vesicular transport or membrane fusion events necessary for transport to lysosomes. Induces lysosomal vesicle formation via interaction with Herpesvirus saimiri tyrosine kinase-interacting protein (TIP). Subsequently, TIP recruits tyrosine-protein kinase LCK, resulting in down-regulation of T-cell antigen receptor TCR. May play a role in generation of enlarged endosomal vesicles via interaction with TIP. In case of infection by papillomavirus HPV11, promotes the maintenance of the viral genome via its interaction with HPV11 helicase E1. The protein is WD repeat-containing protein 48 of Homo sapiens (Human).